Consider the following 445-residue polypeptide: NAD-specific glutamate dehydrogenase (445 aa).

The active site involves Lys-124. 235–241 (GFGNVAW) contacts NAD(+).

The protein belongs to the Glu/Leu/Phe/Val dehydrogenases family. Homohexamer.

It catalyses the reaction L-glutamate + NAD(+) + H2O = 2-oxoglutarate + NH4(+) + NADH + H(+). The protein is NAD-specific glutamate dehydrogenase (gdhB) of Bacteroides fragilis (strain YCH46).